The primary structure comprises 355 residues: 3-dehydroquinate synthase (355 aa).

Residues 105 to 109 (GVVGD), 129 to 130 (TS), Lys-142, Lys-151, and 169 to 172 (TLKT) each bind NAD(+). Zn(2+) is bound by residues Glu-184, His-246, and His-263.

It belongs to the sugar phosphate cyclases superfamily. Dehydroquinate synthase family. Requires NAD(+) as cofactor. Co(2+) serves as cofactor. Zn(2+) is required as a cofactor.

It is found in the cytoplasm. The catalysed reaction is 7-phospho-2-dehydro-3-deoxy-D-arabino-heptonate = 3-dehydroquinate + phosphate. It functions in the pathway metabolic intermediate biosynthesis; chorismate biosynthesis; chorismate from D-erythrose 4-phosphate and phosphoenolpyruvate: step 2/7. Catalyzes the conversion of 3-deoxy-D-arabino-heptulosonate 7-phosphate (DAHP) to dehydroquinate (DHQ). The polypeptide is 3-dehydroquinate synthase (Streptococcus agalactiae serotype V (strain ATCC BAA-611 / 2603 V/R)).